A 246-amino-acid polypeptide reads, in one-letter code: tRNA (guanine-N(1)-)-methyltransferase (246 aa).

S-adenosyl-L-methionine contacts are provided by residues Gly112 and 131–136 (IGDYVL).

The protein belongs to the RNA methyltransferase TrmD family. Homodimer.

The protein localises to the cytoplasm. The enzyme catalyses guanosine(37) in tRNA + S-adenosyl-L-methionine = N(1)-methylguanosine(37) in tRNA + S-adenosyl-L-homocysteine + H(+). In terms of biological role, specifically methylates guanosine-37 in various tRNAs. The sequence is that of tRNA (guanine-N(1)-)-methyltransferase from Fervidobacterium nodosum (strain ATCC 35602 / DSM 5306 / Rt17-B1).